We begin with the raw amino-acid sequence, 490 residues long: GTPase Der (490 aa).

EngA-type G domains lie at 3-166 (PVVA…MEDL) and 203-376 (IKLA…DSST). GTP contacts are provided by residues 9–16 (GRPNVGKS), 56–60 (DTGGI), 118–121 (NKTD), 209–216 (GRPNVGKS), 256–260 (DTAGV), and 321–324 (NKWD). In terms of domain architecture, KH-like spans 377–461 (RRVGTSMLTR…PIRIQFKEGE (85 aa)).

This sequence belongs to the TRAFAC class TrmE-Era-EngA-EngB-Septin-like GTPase superfamily. EngA (Der) GTPase family. Associates with the 50S ribosomal subunit.

GTPase that plays an essential role in the late steps of ribosome biogenesis. In Shigella flexneri serotype 5b (strain 8401), this protein is GTPase Der.